The sequence spans 619 residues: Long-chain fatty acid transport protein 6 (619 aa).

2 helical membrane-spanning segments follow: residues Leu-22–Ile-42 and Val-119–Leu-139. Tyr-221–Lys-232 is an AMP binding site.

Belongs to the ATP-dependent AMP-binding enzyme family.

The protein localises to the cell membrane. It localises to the sarcolemma. The enzyme catalyses a fatty acid(in) = a fatty acid(out). The catalysed reaction is hexadecanoate(out) = hexadecanoate(in). It carries out the reaction (9Z,12Z)-octadecadienoate(out) = (9Z,12Z)-octadecadienoate(in). It catalyses the reaction (9Z)-octadecenoate(out) = (9Z)-octadecenoate(in). The enzyme catalyses a very long-chain fatty acid + ATP + CoA = a very long-chain fatty acyl-CoA + AMP + diphosphate. The catalysed reaction is tetracosanoate + ATP + CoA = tetracosanoyl-CoA + AMP + diphosphate. It carries out the reaction a long-chain fatty acid + ATP + CoA = a long-chain fatty acyl-CoA + AMP + diphosphate. It catalyses the reaction (9Z)-octadecenoate + ATP + CoA = (9Z)-octadecenoyl-CoA + AMP + diphosphate. The enzyme catalyses (5Z,8Z,11Z,14Z)-eicosatetraenoate + ATP + CoA = (5Z,8Z,11Z,14Z)-eicosatetraenoyl-CoA + AMP + diphosphate. Mediates the import of long-chain fatty acids (LCFA) into the cell by facilitating their transport at the plasma membrane. Also functions as an acyl-CoA ligase catalyzing the ATP-dependent formation of fatty acyl-CoA using LCFA and very-long-chain fatty acids (VLCFA) as substrates. Plays a pivotal role in regulating available LCFA substrates from exogenous sources in tissues undergoing high levels of beta-oxidation such as the heart. This chain is Long-chain fatty acid transport protein 6 (Slc27a6), found in Mus musculus (Mouse).